The chain runs to 298 residues: ATP synthase gamma chain (298 aa).

It belongs to the ATPase gamma chain family. In terms of assembly, F-type ATPases have 2 components, CF(1) - the catalytic core - and CF(0) - the membrane proton channel. CF(1) has five subunits: alpha(3), beta(3), gamma(1), delta(1), epsilon(1). CF(0) has three main subunits: a, b and c.

It localises to the cell inner membrane. Produces ATP from ADP in the presence of a proton gradient across the membrane. The gamma chain is believed to be important in regulating ATPase activity and the flow of protons through the CF(0) complex. This chain is ATP synthase gamma chain, found in Wolinella succinogenes (strain ATCC 29543 / DSM 1740 / CCUG 13145 / JCM 31913 / LMG 7466 / NCTC 11488 / FDC 602W) (Vibrio succinogenes).